The chain runs to 66 residues: Photosystem II reaction center protein H (66 aa).

A helical membrane pass occupies residues 29 to 49; sequence PIMGLTMVLFLVFLLIILQIY.

The protein belongs to the PsbH family. As to quaternary structure, PSII is composed of 1 copy each of membrane proteins PsbA, PsbB, PsbC, PsbD, PsbE, PsbF, PsbH, PsbI, PsbJ, PsbK, PsbL, PsbM, PsbT, PsbX, PsbY, PsbZ, Psb30/Ycf12, at least 3 peripheral proteins of the oxygen-evolving complex and a large number of cofactors. It forms dimeric complexes.

It is found in the plastid. It localises to the chloroplast thylakoid membrane. One of the components of the core complex of photosystem II (PSII), required for its stability and/or assembly. PSII is a light-driven water:plastoquinone oxidoreductase that uses light energy to abstract electrons from H(2)O, generating O(2) and a proton gradient subsequently used for ATP formation. It consists of a core antenna complex that captures photons, and an electron transfer chain that converts photonic excitation into a charge separation. In Thalassiosira pseudonana (Marine diatom), this protein is Photosystem II reaction center protein H.